A 281-amino-acid polypeptide reads, in one-letter code: Bifunctional protein FolD (281 aa).

NADP(+) is bound by residues Gly165–Gly167, Thr192, and Val233.

The protein belongs to the tetrahydrofolate dehydrogenase/cyclohydrolase family. As to quaternary structure, homodimer.

The enzyme catalyses (6R)-5,10-methylene-5,6,7,8-tetrahydrofolate + NADP(+) = (6R)-5,10-methenyltetrahydrofolate + NADPH. It catalyses the reaction (6R)-5,10-methenyltetrahydrofolate + H2O = (6R)-10-formyltetrahydrofolate + H(+). The protein operates within one-carbon metabolism; tetrahydrofolate interconversion. Functionally, catalyzes the oxidation of 5,10-methylenetetrahydrofolate to 5,10-methenyltetrahydrofolate and then the hydrolysis of 5,10-methenyltetrahydrofolate to 10-formyltetrahydrofolate. This Mycobacterium bovis (strain BCG / Tokyo 172 / ATCC 35737 / TMC 1019) protein is Bifunctional protein FolD.